The chain runs to 449 residues: tRNA(Ile)-lysidine synthase (449 aa).

35–40 contacts ATP; sequence SGGIDS.

It belongs to the tRNA(Ile)-lysidine synthase family.

It is found in the cytoplasm. It catalyses the reaction cytidine(34) in tRNA(Ile2) + L-lysine + ATP = lysidine(34) in tRNA(Ile2) + AMP + diphosphate + H(+). Ligates lysine onto the cytidine present at position 34 of the AUA codon-specific tRNA(Ile) that contains the anticodon CAU, in an ATP-dependent manner. Cytidine is converted to lysidine, thus changing the amino acid specificity of the tRNA from methionine to isoleucine. This is tRNA(Ile)-lysidine synthase from Coxiella burnetii (strain RSA 493 / Nine Mile phase I).